Consider the following 879-residue polypeptide: Alanine--tRNA ligase (879 aa).

Zn(2+) contacts are provided by His566, His570, Cys668, and His672.

This sequence belongs to the class-II aminoacyl-tRNA synthetase family. Zn(2+) is required as a cofactor.

The protein resides in the cytoplasm. The catalysed reaction is tRNA(Ala) + L-alanine + ATP = L-alanyl-tRNA(Ala) + AMP + diphosphate. Functionally, catalyzes the attachment of alanine to tRNA(Ala) in a two-step reaction: alanine is first activated by ATP to form Ala-AMP and then transferred to the acceptor end of tRNA(Ala). Also edits incorrectly charged Ser-tRNA(Ala) and Gly-tRNA(Ala) via its editing domain. The protein is Alanine--tRNA ligase of Clostridium botulinum (strain Alaska E43 / Type E3).